A 156-amino-acid chain; its full sequence is Small ribosomal subunit protein uS7 (156 aa).

This sequence belongs to the universal ribosomal protein uS7 family. As to quaternary structure, part of the 30S ribosomal subunit. Contacts proteins S9 and S11.

Its function is as follows. One of the primary rRNA binding proteins, it binds directly to 16S rRNA where it nucleates assembly of the head domain of the 30S subunit. Is located at the subunit interface close to the decoding center, probably blocks exit of the E-site tRNA. This Proteus mirabilis (strain HI4320) protein is Small ribosomal subunit protein uS7.